We begin with the raw amino-acid sequence, 291 residues long: Trimeric intracellular cation channel type B (291 aa).

Topologically, residues 1–16 (MEYPWDDLTLAFSRTS) are lumenal. The helical transmembrane segment at 17 to 33 (MFPFFDIAHYLVSVMAL) threads the bilayer. Residues 34–47 (KQRPGAVAAAWSNP) lie on the Cytoplasmic side of the membrane. The chain crosses the membrane as a helical span at residues 48–69 (LSSWLSAMLHCFGGGILSCILL). At 70–80 (AEPPLKFLTNH) the chain is on the lumenal side. Residues 81-99 (TNILLASSIWYIVFFCPRD) form a helical membrane-spanning segment. At 100–103 (LVSQ) the chain is on the cytoplasmic side. A helical transmembrane segment spans residues 104 to 122 (GYSYQPIQLLAAGMKEVTR). A 1,2-diacyl-sn-glycero-3-phospho-(1D-myo-inositol-4,5-bisphosphate) contacts are provided by K118 and R122. Over 123–138 (TWKIVGGVAHANGYYR) the chain is Lumenal. A helical membrane pass occupies residues 139 to 156 (NGWIVMIAVGWARGAGGA). Over 157-179 (IITACEQLLKGDWKPEGDEWLKM) the chain is Cytoplasmic. A helical membrane pass occupies residues 180–197 (SFPCKVTLLGSIMFTFQH). At 198–206 (TRHLAISKH) the chain is on the lumenal side. A helical transmembrane segment spans residues 207 to 225 (DLMFLYTIFLVTIKVTMMM). Topologically, residues 226 to 291 (TKDAAVTLTP…SAKRHAKKED (66 aa)) are cytoplasmic. A disordered region spans residues 254-291 (LSEKKAEVKPSSNGSASSASKRGTEPPSSAKRHAKKED). A compositionally biased stretch (low complexity) spans 264–273 (SSNGSASSAS).

The protein belongs to the TMEM38 family. In terms of assembly, homotrimer; conformation seems to be controled by binding to diacylglycerol (DAG).

It is found in the endoplasmic reticulum membrane. The catalysed reaction is K(+)(in) = K(+)(out). Channel activity is activated by increased cytosolic Ca(2+) levels and blocked by luminal high Ca(2+) levels. Functionally, intracellular monovalent cation channel required for maintenance of rapid intracellular calcium release. Acts as a potassium counter-ion channel that functions in synchronization with calcium release from intracellular stores. Activated by increased cytosolic Ca(2+) levels. The sequence is that of Trimeric intracellular cation channel type B (Tmem38b) from Rattus norvegicus (Rat).